Here is a 548-residue protein sequence, read N- to C-terminus: Folylpolyglutamate synthase (548 aa).

Position 130-133 (130-133 (GKGS)) interacts with ATP. Mg(2+) is bound by residues serine 157, glutamate 234, and histidine 262. ATP is bound by residues arginine 382 and aspartate 396.

It belongs to the folylpolyglutamate synthase family. A monovalent cation is required as a cofactor.

It localises to the mitochondrion inner membrane. It is found in the mitochondrion matrix. Its subcellular location is the cytoplasm. It carries out the reaction (6S)-5,6,7,8-tetrahydrofolyl-(gamma-L-Glu)(n) + L-glutamate + ATP = (6S)-5,6,7,8-tetrahydrofolyl-(gamma-L-Glu)(n+1) + ADP + phosphate + H(+). It participates in cofactor biosynthesis; tetrahydrofolylpolyglutamate biosynthesis. Its function is as follows. Catalyzes conversion of folates to polyglutamate derivatives allowing concentration of folate compounds in the cell and the intracellular retention of these cofactors, which are important substrates for most of the folate-dependent enzymes that are involved in one-carbon transfer reactions involved in purine, pyrimidine and amino acid synthesis. Required for methionine synthesis and maintenance of intact mitochondrial DNA. Involved in telomere maintenance. This chain is Folylpolyglutamate synthase, found in Saccharomyces cerevisiae (strain RM11-1a) (Baker's yeast).